The sequence spans 343 residues: MTSQITLSLDAMGGDHGPSVVVPAALQALERHPHLHLVLVGQEETLREHLQAGNQGDSGRLSIRHCTQVVAMDEPPSHALRSKKDSSMRVALEMVKTGEADGSVSAGNTGALMATARYLLKTLPGIDRPAIMSTIPTLGGATHMLDLGANVDCTGEHLFQFGVMGAVAAEAVHGLERPRVGLLNIGEEEIKGNEQVKHAAELLLESEEIHYAGYIEGDGIYKGEADVVVCDGFVGNVALKTSEGVATLISEYMRMEFRRNLLSKIAGVVALPVLRALRRRIDPRQYNGASLLGLRGVALKSHGSADSFAFGRAIDTAVREAEQGVPDLINARIERLLGAKEGA.

It belongs to the PlsX family. Homodimer. Probably interacts with PlsY.

The protein resides in the cytoplasm. The catalysed reaction is a fatty acyl-[ACP] + phosphate = an acyl phosphate + holo-[ACP]. Its pathway is lipid metabolism; phospholipid metabolism. In terms of biological role, catalyzes the reversible formation of acyl-phosphate (acyl-PO(4)) from acyl-[acyl-carrier-protein] (acyl-ACP). This enzyme utilizes acyl-ACP as fatty acyl donor, but not acyl-CoA. This Halorhodospira halophila (strain DSM 244 / SL1) (Ectothiorhodospira halophila (strain DSM 244 / SL1)) protein is Phosphate acyltransferase.